The chain runs to 104 residues: Proteasome subunit beta type-8 (104 aa).

This sequence belongs to the peptidase T1B family. As to quaternary structure, the 26S proteasome consists of a 20S proteasome core and two 19S regulatory subunits. The 20S proteasome core is composed of 28 subunits that are arranged in four stacked rings, resulting in a barrel-shaped structure. The two end rings are each formed by seven alpha subunits, and the two central rings are each formed by seven beta subunits. The catalytic chamber with the active sites is on the inside of the barrel. Component of the immunoproteasome, where it displaces the equivalent housekeeping subunit PSMB5. Component of the spermatoproteasome, a form of the proteasome specifically found in testis. Directly interacts with POMP.

It is found in the cytoplasm. The protein resides in the nucleus. It carries out the reaction Cleavage of peptide bonds with very broad specificity.. The proteasome is a multicatalytic proteinase complex which is characterized by its ability to cleave peptides with Arg, Phe, Tyr, Leu, and Glu adjacent to the leaving group at neutral or slightly basic pH. The proteasome has an ATP-dependent proteolytic activity. This subunit is involved in antigen processing to generate class I binding peptides. May participate in the generation of spliced peptides resulting from the ligation of two separate proteasomal cleavage products that are not contiguous in the parental protein. Required for adipocyte differentiation. The sequence is that of Proteasome subunit beta type-8 (PSMB8) from Sus scrofa (Pig).